Consider the following 428-residue polypeptide: 3-phosphoshikimate 1-carboxyvinyltransferase (428 aa).

3-phosphoshikimate-binding residues include Lys22, Ser23, and Arg27. Phosphoenolpyruvate is bound at residue Lys22. Positions 96 and 124 each coordinate phosphoenolpyruvate. 3-phosphoshikimate is bound by residues Ser170, Ser171, Gln172, Ser198, Asp314, Asn337, and Lys341. Phosphoenolpyruvate is bound at residue Gln172. Asp314 (proton acceptor) is an active-site residue. Phosphoenolpyruvate-binding residues include Arg345, Arg387, and Lys412.

The protein belongs to the EPSP synthase family. In terms of assembly, monomer.

Its subcellular location is the cytoplasm. It catalyses the reaction 3-phosphoshikimate + phosphoenolpyruvate = 5-O-(1-carboxyvinyl)-3-phosphoshikimate + phosphate. Its pathway is metabolic intermediate biosynthesis; chorismate biosynthesis; chorismate from D-erythrose 4-phosphate and phosphoenolpyruvate: step 6/7. Functionally, catalyzes the transfer of the enolpyruvyl moiety of phosphoenolpyruvate (PEP) to the 5-hydroxyl of shikimate-3-phosphate (S3P) to produce enolpyruvyl shikimate-3-phosphate and inorganic phosphate. This Vibrio vulnificus (strain YJ016) protein is 3-phosphoshikimate 1-carboxyvinyltransferase.